Consider the following 291-residue polypeptide: 4-hydroxy-tetrahydrodipicolinate synthase (291 aa).

Residue Thr45 participates in pyruvate binding. Tyr133 (proton donor/acceptor) is an active-site residue. Catalysis depends on Lys161, which acts as the Schiff-base intermediate with substrate. Ile203 serves as a coordination point for pyruvate.

It belongs to the DapA family. In terms of assembly, homotetramer; dimer of dimers.

It localises to the cytoplasm. The enzyme catalyses L-aspartate 4-semialdehyde + pyruvate = (2S,4S)-4-hydroxy-2,3,4,5-tetrahydrodipicolinate + H2O + H(+). It functions in the pathway amino-acid biosynthesis; L-lysine biosynthesis via DAP pathway; (S)-tetrahydrodipicolinate from L-aspartate: step 3/4. In terms of biological role, catalyzes the condensation of (S)-aspartate-beta-semialdehyde [(S)-ASA] and pyruvate to 4-hydroxy-tetrahydrodipicolinate (HTPA). The sequence is that of 4-hydroxy-tetrahydrodipicolinate synthase from Neisseria meningitidis serogroup C / serotype 2a (strain ATCC 700532 / DSM 15464 / FAM18).